We begin with the raw amino-acid sequence, 92 residues long: UPF0358 protein SH1840 (92 aa).

It belongs to the UPF0358 family.

The sequence is that of UPF0358 protein SH1840 from Staphylococcus haemolyticus (strain JCSC1435).